We begin with the raw amino-acid sequence, 197 residues long: RNA polymerase II subunit A C-terminal domain phosphatase ssup-72 (197 aa).

Ser-39 bears the Phosphoserine mark.

This sequence belongs to the SSU72 phosphatase family. In terms of assembly, may interact with synd-1 (via C-terminus); the interaction may prevent ssup-72 binding to RNA polymerase II ama-1. May interact with RNA polymerase II ama-1. In terms of processing, may be phosphorylated by kin-20. As to expression, expressed in epidermis, intestine and nervous system.

It localises to the nucleus. The catalysed reaction is O-phospho-L-seryl-[protein] + H2O = L-seryl-[protein] + phosphate. The enzyme catalyses O-phospho-L-threonyl-[protein] + H2O = L-threonyl-[protein] + phosphate. Functionally, protein phosphatase that dephosphorylates 'Ser-5' of the heptad repeats YSPTSPS in the C-terminal domain of the large RNA polymerase II subunit ama-1. By regulating the phosphorylation status of ama-1 and thus ama-1 binding to specific polyadenylation sites, regulates alternative polyadenylation of pre-mRNAs, including unc-44 and dlk-1 mRNAs. This results in the tissue-specific expression of unc-44 isoforms. The chain is RNA polymerase II subunit A C-terminal domain phosphatase ssup-72 from Caenorhabditis elegans.